Reading from the N-terminus, the 163-residue chain is Nucleotide-binding protein PC1_1036 (163 aa).

This sequence belongs to the YajQ family.

In terms of biological role, nucleotide-binding protein. This chain is Nucleotide-binding protein PC1_1036, found in Pectobacterium carotovorum subsp. carotovorum (strain PC1).